Reading from the N-terminus, the 75-residue chain is UPF0729 protein C18orf32 homolog (75 aa).

The interval 1–37 (MVCIPCIVIPVLLWVYKRFLEPVLYPIISPIISRFWR) is necessary for its localzation to the endoplasmic reticulum and lipid droplets. Over residues 43–65 (DTPQQKTSTAECNGAANGSTANG) the composition is skewed to polar residues. Residues 43–75 (DTPQQKTSTAECNGAANGSTANGPKTVADKKAD) are disordered.

Belongs to the UPF0729 family.

It localises to the endoplasmic reticulum. The protein localises to the lipid droplet. This is UPF0729 protein C18orf32 homolog from Danio rerio (Zebrafish).